Consider the following 151-residue polypeptide: S-protein homolog 1 (151 aa).

A signal peptide spans 1 to 18 (MNCIKQFLLAICFSLALT).

Belongs to the plant self-incompatibility (S1) protein family. In terms of tissue distribution, restricted to floral tissues.

It localises to the secreted. The chain is S-protein homolog 1 from Arabidopsis thaliana (Mouse-ear cress).